Consider the following 853-residue polypeptide: DNA mismatch repair protein MutS (853 aa).

Position 616 to 623 (616 to 623 (GPNMGGKS)) interacts with ATP.

The protein belongs to the DNA mismatch repair MutS family.

Functionally, this protein is involved in the repair of mismatches in DNA. It is possible that it carries out the mismatch recognition step. This protein has a weak ATPase activity. The chain is DNA mismatch repair protein MutS from Erwinia tasmaniensis (strain DSM 17950 / CFBP 7177 / CIP 109463 / NCPPB 4357 / Et1/99).